The sequence spans 489 residues: COX3 mRNA-specific translational activator PET494 (489 aa).

It localises to the mitochondrion inner membrane. Its function is as follows. Required for the expression of the mitochondrial gene for cytochrome c oxidase subunit III (COX3). This chain is COX3 mRNA-specific translational activator PET494 (PET494), found in Saccharomyces cerevisiae (strain ATCC 204508 / S288c) (Baker's yeast).